The chain runs to 326 residues: Vomeronasal type-1 receptor 100 (326 aa).

At 1 to 32 (MSEFPFFSPQPLFSYMMNKNSRVHTDSNIRNT) the chain is on the extracellular side. Residues 33-53 (FFTEIGIGILANSFLLLFHIF) traverse the membrane as a helical segment. Residues 54–70 (KFIRGQRSRLTDLPIGL) lie on the Cytoplasmic side of the membrane. The helical transmembrane segment at 71-91 (LSLIHLLMLLMGAFIAIDIFI) threads the bilayer. At 92–104 (SWRGWDDIICKFL) the chain is on the extracellular side. Cysteine 101 and cysteine 188 are disulfide-bonded. The helical transmembrane segment at 105-127 (VYLYRSFRGLSLCTTCMLSVLQA) threads the bilayer. At 128-149 (ITLSPRSSCLAKFKHKSPHHVS) the chain is on the cytoplasmic side. A helical membrane pass occupies residues 150 to 170 (CAIISLSILYMFISSHLLVSI). Over 171-209 (NATPNLTTNNFMQVTQSCYIIPLSYLMQSMFSTLLAIRD) the chain is Extracellular. Asparagine 175 carries N-linked (GlcNAc...) asparagine glycosylation. Residues 210–230 (ISLISLMVLSTCYMVVLLCRH) form a helical membrane-spanning segment. Residues 231-254 (RNQIQHLQGTNLSPKASPEQRATQ) are Cytoplasmic-facing. A helical transmembrane segment spans residues 255–275 (TILMLMTFFVLMSIFDSIVSC). Topologically, residues 276–285 (SRTMYLNDPT) are extracellular. A helical membrane pass occupies residues 286 to 306 (SYYIQIFVVYIYATVSPFVFM). Residues 307–326 (STEKHIVNFLKSMCVRVKNV) lie on the Cytoplasmic side of the membrane.

The protein belongs to the G-protein coupled receptor 1 family. As to expression, expressed in 1-4% of neurons of the vomeronasal organ. Only one pheromone receptor gene may be expressed in a particular neuron. Not expressed in the main olfactory epithelium.

The protein localises to the cell membrane. Its function is as follows. Putative pheromone receptor implicated in the regulation of social as well as reproductive behavior. This Rattus norvegicus (Rat) protein is Vomeronasal type-1 receptor 100 (Vom1r100).